Here is a 489-residue protein sequence, read N- to C-terminus: Glycogen synthase (489 aa).

Position 20 (arginine 20) interacts with ADP-alpha-D-glucose.

This sequence belongs to the glycosyltransferase 1 family. Bacterial/plant glycogen synthase subfamily.

The enzyme catalyses [(1-&gt;4)-alpha-D-glucosyl](n) + ADP-alpha-D-glucose = [(1-&gt;4)-alpha-D-glucosyl](n+1) + ADP + H(+). It functions in the pathway glycan biosynthesis; glycogen biosynthesis. Synthesizes alpha-1,4-glucan chains using ADP-glucose. The protein is Glycogen synthase of Chlorobium luteolum (strain DSM 273 / BCRC 81028 / 2530) (Pelodictyon luteolum).